Consider the following 344-residue polypeptide: MSDAARPLDPDEAARRLGPWLGAGGQAGGVVLAVSGGPDSTALMGCAAALPPRVPVLVATVDHGLRPESGEEAAGVAALAGRLGLPHRILTWRGEKPRTRLQEAARAARYDLLLGLAREAGAGAILTAHTLDDQAETVLMRLCAGSGPAGLAGIAPARRLGGLLLGRPFLDLPKARLVATCAAAGWPFAVDPGNAAARFARARLRRVMPLLAAEGLTPARLARLAARLRRNEAALAAAAEAARPSLAAAPAGPGRLALDAAGLAALPEAVALRVLADAIAALRAGERRPERLERLEEALFGRILPAIAAGTPLRLTLGGALLDLAGGRLLLAPEPPRRRTKRAG.

35 to 40 (SGGPDS) serves as a coordination point for ATP.

Belongs to the tRNA(Ile)-lysidine synthase family.

The protein resides in the cytoplasm. The catalysed reaction is cytidine(34) in tRNA(Ile2) + L-lysine + ATP = lysidine(34) in tRNA(Ile2) + AMP + diphosphate + H(+). Functionally, ligates lysine onto the cytidine present at position 34 of the AUA codon-specific tRNA(Ile) that contains the anticodon CAU, in an ATP-dependent manner. Cytidine is converted to lysidine, thus changing the amino acid specificity of the tRNA from methionine to isoleucine. This Methylobacterium sp. (strain 4-46) protein is tRNA(Ile)-lysidine synthase.